Here is an 842-residue protein sequence, read N- to C-terminus: Envelope glycoprotein gp160 (842 aa).

The first 23 residues, 1–23 (MGMKSGWLLFYLLVSLIKVIGSE), serve as a signal peptide directing secretion. The Extracellular segment spans residues 24 to 663 (QHWVTVYYGV…ITKWLWYIKI (640 aa)). Cys45 and Cys65 form a disulfide bridge. Asn79, Asn123, Asn131, Asn134, Asn149, Asn153, Asn181, Asn190, Asn225, Asn229, Asn234, Asn255, Asn267, Asn278, Asn284, Asn290, Asn320, Asn331, and Asn345 each carry an N-linked (GlcNAc...) asparagine; by host glycan. Intrachain disulfides connect Cys110–Cys198, Cys117–Cys189, Cys122–Cys150, Cys211–Cys240, and Cys221–Cys232. The tract at residues 122 to 149 (CNDSYGEERNNTNMTTREPDIGYKQMKN) is V1. The V2 stretch occupies residues 150 to 189 (CSFNATTELTDKKKQVYSLFYVEDVVPINAYNKTYRLINC). Residues 285 to 318 (CTRPGNNTGGQVQIGPAMTFYNIEKIVGDIRQAY) form a V3 region. An intrachain disulfide couples Cys285 to Cys319. Residues 353–363 (RNEGDLEVTHL) form a CD4-binding loop region. Disulfide bonds link Cys367–Cys423 and Cys374–Cys396. Residues 374–396 (CNTSKLFNEELLNETGEPITLPC) form a V4 region. Asn375, Asn386, Asn422, and Asn426 each carry an N-linked (GlcNAc...) asparagine; by host glycan. V5 regions lie at residues 439–448 (DTKETIVYPS) and 441–448 (KETIVYPS). A fusion peptide region spans residues 489-510 (AAFGLGALFLGFLGAAGSTMGA). Residues 552-570 (KQLQAKVLAIERYLRDQQI) form an immunosuppression region. Cys576 and Cys582 are oxidised to a cystine. N-linked (GlcNAc...) asparagine; by host glycosylation is found at Asn589, Asn594, Asn595, Asn604, and Asn616. Residues 612-646 (EKVRNYSGVIFGLIEQAQEQQNTNEKSLLELDQWD) adopt a coiled-coil conformation. The interval 641 to 662 (ELDQWDSLWSWFGITKWLWYIK) is MPER; binding to GalCer. The chain crosses the membrane as a helical span at residues 664 to 684 (AIMIVAGIVGIRIISIVITII). At 685 to 842 (ARVRQGYSPL…IRQGLERALI (158 aa)) the chain is on the cytoplasmic side. The YXXL motif; contains endocytosis signal signature appears at 691 to 694 (YSPL).

This sequence belongs to the HIV-1 env protein family. As to quaternary structure, the mature envelope protein (Env) consists of a homotrimer of non-covalently associated gp120-gp41 heterodimers. The resulting complex protrudes from the virus surface as a spike. There seems to be as few as 10 spikes on the average virion. Interacts with host CD4, CCR5 and CXCR4. Gp120 also interacts with the C-type lectins CD209/DC-SIGN and CLEC4M/DC-SIGNR (collectively referred to as DC-SIGN(R)). Gp120 and gp41 interact with GalCer. Gp120 interacts with host ITGA4/ITGB7 complex; on CD4+ T-cells, this interaction results in rapid activation of integrin ITGAL/LFA-1, which facilitates efficient cell-to-cell spreading of HIV-1. Gp120 interacts with cell-associated heparan sulfate; this interaction increases virus infectivity on permissive cells and may be involved in infection of CD4- cells. In terms of assembly, the mature envelope protein (Env) consists of a homotrimer of non-covalently associated gp120-gp41 heterodimers. The resulting complex protrudes from the virus surface as a spike. There seems to be as few as 10 spikes on the average virion. Post-translationally, highly glycosylated by host. The high number of glycan on the protein is reffered to as 'glycan shield' because it contributes to hide protein sequence from adaptive immune system. Palmitoylation of the transmembrane protein and of Env polyprotein (prior to its proteolytic cleavage) is essential for their association with host cell membrane lipid rafts. Palmitoylation is therefore required for envelope trafficking to classical lipid rafts, but not for viral replication. In terms of processing, specific enzymatic cleavages in vivo yield mature proteins. Envelope glycoproteins are synthesized as an inactive precursor that is heavily N-glycosylated and processed likely by host cell furin in the Golgi to yield the mature SU and TM proteins. The cleavage site between SU and TM requires the minimal sequence [KR]-X-[KR]-R. About 2 of the 9 disulfide bonds of gp41 are reduced by P4HB/PDI, following binding to CD4 receptor.

Its subcellular location is the virion membrane. It is found in the host cell membrane. The protein localises to the host endosome membrane. Functionally, oligomerizes in the host endoplasmic reticulum into predominantly trimers. In a second time, gp160 transits in the host Golgi, where glycosylation is completed. The precursor is then proteolytically cleaved in the trans-Golgi and thereby activated by cellular furin or furin-like proteases to produce gp120 and gp41. In terms of biological role, attaches the virus to the host lymphoid cell by binding to the primary receptor CD4. This interaction induces a structural rearrangement creating a high affinity binding site for a chemokine coreceptor like CXCR4 and/or CCR5. Acts as a ligand for CD209/DC-SIGN and CLEC4M/DC-SIGNR, which are respectively found on dendritic cells (DCs), and on endothelial cells of liver sinusoids and lymph node sinuses. These interactions allow capture of viral particles at mucosal surfaces by these cells and subsequent transmission to permissive cells. HIV subverts the migration properties of dendritic cells to gain access to CD4+ T-cells in lymph nodes. Virus transmission to permissive T-cells occurs either in trans (without DCs infection, through viral capture and transmission), or in cis (following DCs productive infection, through the usual CD4-gp120 interaction), thereby inducing a robust infection. In trans infection, bound virions remain infectious over days and it is proposed that they are not degraded, but protected in non-lysosomal acidic organelles within the DCs close to the cell membrane thus contributing to the viral infectious potential during DCs' migration from the periphery to the lymphoid tissues. On arrival at lymphoid tissues, intact virions recycle back to DCs' cell surface allowing virus transmission to CD4+ T-cells. Acts as a class I viral fusion protein. Under the current model, the protein has at least 3 conformational states: pre-fusion native state, pre-hairpin intermediate state, and post-fusion hairpin state. During fusion of viral and target intracellular membranes, the coiled coil regions (heptad repeats) assume a trimer-of-hairpins structure, positioning the fusion peptide in close proximity to the C-terminal region of the ectodomain. The formation of this structure appears to drive apposition and subsequent fusion of viral and target cell membranes. Complete fusion occurs in host cell endosomes and is dynamin-dependent, however some lipid transfer might occur at the plasma membrane. The virus undergoes clathrin-dependent internalization long before endosomal fusion, thus minimizing the surface exposure of conserved viral epitopes during fusion and reducing the efficacy of inhibitors targeting these epitopes. Membranes fusion leads to delivery of the nucleocapsid into the cytoplasm. The polypeptide is Envelope glycoprotein gp160 (Human immunodeficiency virus type 1 group N (isolate YBF30) (HIV-1)).